A 129-amino-acid chain; its full sequence is Small ribosomal subunit protein uS11 (129 aa).

Belongs to the universal ribosomal protein uS11 family. Part of the 30S ribosomal subunit. Interacts with proteins S7 and S18. Binds to IF-3.

In terms of biological role, located on the platform of the 30S subunit, it bridges several disparate RNA helices of the 16S rRNA. Forms part of the Shine-Dalgarno cleft in the 70S ribosome. This Aromatoleum aromaticum (strain DSM 19018 / LMG 30748 / EbN1) (Azoarcus sp. (strain EbN1)) protein is Small ribosomal subunit protein uS11.